We begin with the raw amino-acid sequence, 371 residues long: tRNA (guanine(26)-N(2))-dimethyltransferase (371 aa).

In terms of domain architecture, Trm1 methyltransferase spans 4 to 368 (VEVTEGRTRF…APLPVLEKVV (365 aa)). Positions 41, 66, 82, 108, and 109 each coordinate S-adenosyl-L-methionine. Residues Cys-237, Cys-240, Cys-256, and Cys-259 each coordinate Zn(2+).

The protein belongs to the class I-like SAM-binding methyltransferase superfamily. Trm1 family.

It catalyses the reaction guanosine(26) in tRNA + 2 S-adenosyl-L-methionine = N(2)-dimethylguanosine(26) in tRNA + 2 S-adenosyl-L-homocysteine + 2 H(+). Functionally, dimethylates a single guanine residue at position 26 of a number of tRNAs using S-adenosyl-L-methionine as donor of the methyl groups. In Methanoculleus marisnigri (strain ATCC 35101 / DSM 1498 / JR1), this protein is tRNA (guanine(26)-N(2))-dimethyltransferase.